A 187-amino-acid polypeptide reads, in one-letter code: Transcriptional activator of sulfur metabolism MET28 (187 aa).

Residues 105 to 168 (DKIKQERRRK…EFWKAKLNDI (64 aa)) form the bZIP domain. The segment at 106–136 (KIKQERRRKNTEASQRFRIRKKQKNFENMNK) is basic motif. Residues 137–151 (LQNLNTQINKLRDRI) form a leucine-zipper region.

This sequence belongs to the bZIP family. As to quaternary structure, interacts with MET4 to form a heteromeric complex which also includes CBF1. Forms two alternate complexes associating MET28 with MET4 and either MET31 or MET32. Binds to DNA through the MET4-MET28-CBF1 complex.

It localises to the cytoplasm. The protein resides in the nucleus. In terms of biological role, acts as an accessory factor in the activation of sulfur amino acids metabolism genes. Possesses no intrinsic transcription activation abilities. Binds to the MET16 promoter as a complex with MET4 and CBF1. Enhances the DNA-binding activity of CBF1. The sequence is that of Transcriptional activator of sulfur metabolism MET28 (MET28) from Saccharomyces cerevisiae (strain ATCC 204508 / S288c) (Baker's yeast).